A 585-amino-acid polypeptide reads, in one-letter code: Arginine--tRNA ligase (585 aa).

The 'HIGH' region motif lies at 131-141 (ANPTGPMHVGH).

The protein belongs to the class-I aminoacyl-tRNA synthetase family. As to quaternary structure, monomer.

Its subcellular location is the cytoplasm. The catalysed reaction is tRNA(Arg) + L-arginine + ATP = L-arginyl-tRNA(Arg) + AMP + diphosphate. The polypeptide is Arginine--tRNA ligase (Brucella anthropi (strain ATCC 49188 / DSM 6882 / CCUG 24695 / JCM 21032 / LMG 3331 / NBRC 15819 / NCTC 12168 / Alc 37) (Ochrobactrum anthropi)).